We begin with the raw amino-acid sequence, 200 residues long: Tegument protein UL55 homolog (200 aa).

Residues 1–20 (MLPANRAEHSSDAEPRDIGS) show a composition bias toward basic and acidic residues. The segment at 1-23 (MLPANRAEHSSDAEPRDIGSHGR) is disordered.

It belongs to the alphaherpesvirinae HHV-1 UL55 family.

The protein resides in the virion tegument. The protein localises to the host nucleus matrix. The protein is Tegument protein UL55 homolog of Equine herpesvirus 1 (strain Ab4p) (EHV-1).